The chain runs to 311 residues: Aurora kinase (311 aa).

The Protein kinase domain occupies 20–300 (FEIGRFLGRG…IEDILRHPFL (281 aa)). Residue Lys-49 participates in ATP binding. Asp-143 (proton acceptor) is an active-site residue. Residues 189 to 216 (DFGWSVHHPTHGGRRRTQCGTLDYLPPE) form an activation loop region. Thr-205 carries the phosphothreonine; by autocatalysis modification. Residues 280 to 299 (MLIRSPEARISIEDILRHPF) carry the Destruction (D)-box motif.

Belongs to the protein kinase superfamily. Ser/Thr protein kinase family. Aurora subfamily. As to quaternary structure, interacts with EB1 (via C-terminal residues 101-238). In terms of processing, phosphorylated in mitosis and cytokinesis. Activated by autophosphorylation at Thr-205.

It localises to the nucleus. The protein resides in the cytoplasm. Its subcellular location is the cytoskeleton. The protein localises to the microtubule organizing center. It is found in the centrosome. It localises to the spindle. The protein resides in the spindle pole. Its subcellular location is the nucleus membrane. The enzyme catalyses L-seryl-[protein] + ATP = O-phospho-L-seryl-[protein] + ADP + H(+). The catalysed reaction is L-threonyl-[protein] + ATP = O-phospho-L-threonyl-[protein] + ADP + H(+). Its activity is regulated as follows. Activated by cell-cycle phase specific phosphorylation. Inhibited by ATP-competitive inhibitors N-[4-[[6-Methoxy-7-[3-(4-morpholinyl)propoxy]-4-quinazolinyl]amino]phenyl]benzamide (ZM447439) and cyclopropanecarboxylic acid-(3-(4-(3-trifluoromethylphenylamino)-pyrimidin-2-ylamino)-phenyl)-amide (CFPPA). Inhibition leads to reduced growth, increased cytokinesis, microtubular defects, and increased ploidy of the cells. Functionally, involved in regulation of the cell cycle. Required for mitotic cell division and cytokinesis. Based on its localization to centrosomes and spindle microtubules, as well as to various cytoskeletal components such as the median body, parental attachment disk, and anterior and posterior-lateral paraflagellar dense rods, may coordinate reorganization and segregation of tubulin-containing structures during mitosis and cytokinesis. May regulate microtubule disassembly by phosphorylating cytoskeletal proteins leading to their destabilization. Phosphorylates EB1 at 'Ser-148' in vitro. Phosphorylates histone H3 in vitro. The sequence is that of Aurora kinase from Giardia intestinalis (strain ATCC 50803 / WB clone C6) (Giardia lamblia).